The primary structure comprises 944 residues: Bifunctional uridylyltransferase/uridylyl-removing enzyme (944 aa).

Residues 1-371 are uridylyltransferase; the sequence is MRDLDFTNIL…RFTHRNRKIA (371 aa). Positions 372–727 are uridylyl-removing; sequence GSVEFVEDRG…VRTDSFHAIT (356 aa). Residues 488 to 604 form the HD domain; sequence VDEHLIRTVD…TDFADRVQSL (117 aa). 2 consecutive ACT domains span residues 728–809 and 839–918; these read EITV…EVIA and VIEV…LRER. Positions 911–944 are disordered; that stretch reads EEDELRERMPSGIIAPAATARTPPASEKKAGSPI. Residues 925–935 show a composition bias toward low complexity; the sequence is APAATARTPPA.

This sequence belongs to the GlnD family. Mg(2+) is required as a cofactor.

It carries out the reaction [protein-PII]-L-tyrosine + UTP = [protein-PII]-uridylyl-L-tyrosine + diphosphate. It catalyses the reaction [protein-PII]-uridylyl-L-tyrosine + H2O = [protein-PII]-L-tyrosine + UMP + H(+). With respect to regulation, uridylyltransferase (UTase) activity is inhibited by glutamine, while glutamine likely activates uridylyl-removing (UR) activity. Modifies, by uridylylation and deuridylylation, the PII regulatory proteins GlnB and GlnK, in response to the nitrogen status of the cell that GlnD senses through the glutamine level. Under low glutamine levels, catalyzes the conversion of the PII proteins and UTP to PII-UMP and PPi, while under higher glutamine levels, GlnD likely hydrolyzes PII-UMP to PII and UMP (deuridylylation). Thus, controls uridylylation state and activity of the PII proteins, and plays an important role in the regulation of nitrogen metabolism. This Rhizobium leguminosarum bv. viciae protein is Bifunctional uridylyltransferase/uridylyl-removing enzyme.